The following is a 79-amino-acid chain: MAYSEKEILDGLAEIIDEIAGVPAAEVTPEKSFVDDLDIDSLSMVEIAVAAQDKFGVEIPDDQLKDLKTVQDVINYIQK.

Positions 6 to 79 constitute a Carrier domain; sequence KEILDGLAEI…VQDVINYIQK (74 aa). Position 41 is an O-(pantetheine 4'-phosphoryl)serine (Ser41).

This sequence belongs to the acyl carrier protein (ACP) family. 4'-phosphopantetheine is transferred from CoA to a specific serine of apo-ACP by AcpS. This modification is essential for activity because fatty acids are bound in thioester linkage to the sulfhydryl of the prosthetic group.

It localises to the cytoplasm. Its pathway is lipid metabolism; fatty acid biosynthesis. Functionally, carrier of the growing fatty acid chain in fatty acid biosynthesis. In Thermobifida fusca (strain YX), this protein is Acyl carrier protein.